A 420-amino-acid polypeptide reads, in one-letter code: Glutamyl-tRNA reductase (420 aa).

Residues 49–52, S109, 114–116, and Q120 contribute to the substrate site; these read TCNR and EPQ. Residue C50 is the Nucleophile of the active site. Residue 189–194 coordinates NADP(+); it reads GAGETI.

Belongs to the glutamyl-tRNA reductase family. In terms of assembly, homodimer.

The catalysed reaction is (S)-4-amino-5-oxopentanoate + tRNA(Glu) + NADP(+) = L-glutamyl-tRNA(Glu) + NADPH + H(+). The protein operates within porphyrin-containing compound metabolism; protoporphyrin-IX biosynthesis; 5-aminolevulinate from L-glutamyl-tRNA(Glu): step 1/2. Catalyzes the NADPH-dependent reduction of glutamyl-tRNA(Glu) to glutamate 1-semialdehyde (GSA). In Photorhabdus laumondii subsp. laumondii (strain DSM 15139 / CIP 105565 / TT01) (Photorhabdus luminescens subsp. laumondii), this protein is Glutamyl-tRNA reductase.